The primary structure comprises 516 residues: GTPase Obg (516 aa).

Positions 4–161 (PTFVDRVTLH…LEIVLELKVV (158 aa)) constitute an Obg domain. The OBG-type G domain occupies 162-332 (ADIGLVGFPS…LTFAMAGIVE (171 aa)). Residues 168–175 (GFPSAGKS), 193–197 (FTTLV), 214–217 (DVPG), 284–287 (NKVD), and 313–315 (SAA) contribute to the GTP site. The Mg(2+) site is built by Ser175 and Thr195. The region spanning 351–432 (PSVDGSDAFT…ENAVVFDFKP (82 aa)) is the OCT domain. Residues 466–491 (AMADRAEGETRADVARRLDRPAREDG) are compositionally biased toward basic and acidic residues. The disordered stretch occupies residues 466 to 516 (AMADRAEGETRADVARRLDRPAREDGGAYGPQSYEIGGRDDPDWAEEDLGE).

Belongs to the TRAFAC class OBG-HflX-like GTPase superfamily. OBG GTPase family. Monomer. Mg(2+) serves as cofactor.

The protein resides in the cytoplasm. In terms of biological role, an essential GTPase which binds GTP, GDP and possibly (p)ppGpp with moderate affinity, with high nucleotide exchange rates and a fairly low GTP hydrolysis rate. Plays a role in control of the cell cycle, stress response, ribosome biogenesis and in those bacteria that undergo differentiation, in morphogenesis control. The sequence is that of GTPase Obg from Nocardioides sp. (strain ATCC BAA-499 / JS614).